A 286-amino-acid polypeptide reads, in one-letter code: Putative sensory transducer protein YfmS (286 aa).

The region spanning 68–286 (ITDAIRSNQK…KMAEKALEEE (219 aa)) is the Methyl-accepting transducer domain.

This sequence belongs to the methyl-accepting chemotaxis (MCP) protein family.

Its function is as follows. Chemotactic-signal transducers respond to changes in the concentration of attractants and repellents in the environment, transduce a signal from the outside to the inside of the cell, and facilitate sensory adaptation through the variation of the level of methylation. Attractants increase the level of methylation while repellents decrease the level of methylation. The sequence is that of Putative sensory transducer protein YfmS (yfmS) from Bacillus subtilis (strain 168).